Reading from the N-terminus, the 309-residue chain is Taste receptor type 2 member 8 (309 aa).

Topologically, residues 1–7 (MFSPADN) are extracellular. A helical membrane pass occupies residues 8 to 28 (IFIILITGEFILGILGNGYIA). The Cytoplasmic portion of the chain corresponds to 29-50 (LVNWIDWIKKKKISTIDYILTN). A helical transmembrane segment spans residues 51 to 71 (LVISRICLISVMVVNGIVIAV). Residues 72–82 (YPDVYTKSKLQ) are Extracellular-facing. The helical transmembrane segment at 83–103 (IAICTFWTFANYLNMWITTCL) threads the bilayer. The Cytoplasmic segment spans residues 104–131 (NVFYFLKIANSSHPLFLWLKQKIDMVVR). Residues 132–152 (WILLGCFAISLLVSLIAAIVL) traverse the membrane as a helical segment. Topologically, residues 153–184 (SYDYRFHAIAKHKRNITEMFHVSKRPYFEPLT) are extracellular. The N-linked (GlcNAc...) asparagine glycan is linked to Asn167. Residues 185-205 (LFNLFAIVPFIVSLISFFLLV) traverse the membrane as a helical segment. Over 206–239 (RSLWRHTKQIKLYATGGRDPSTEVHVRAIKTMTS) the chain is Cytoplasmic. Residues 240–260 (FIFLFFLYYISSILVTFSYLM) traverse the membrane as a helical segment. At 261–266 (TKYKLA) the chain is on the extracellular side. Residues 267–287 (VEFGEIVAILYPLGHSLILIV) traverse the membrane as a helical segment. Topologically, residues 288–309 (LNNKLRQTFVRMLTCRKIACVI) are cytoplasmic.

The protein belongs to the G-protein coupled receptor T2R family.

The protein localises to the membrane. In terms of biological role, receptor that may play a role in the perception of bitterness and is gustducin-linked. May play a role in sensing the chemical composition of the gastrointestinal content. The activity of this receptor may stimulate alpha gustducin, mediate PLC-beta-2 activation and lead to the gating of TRPM5. The protein is Taste receptor type 2 member 8 (TAS2R8) of Gorilla gorilla gorilla (Western lowland gorilla).